Here is a 140-residue protein sequence, read N- to C-terminus: Nucleoside diphosphate kinase (140 aa).

Lys-10, Phe-58, Arg-86, Thr-92, Arg-103, and Asn-113 together coordinate ATP. His-116 acts as the Pros-phosphohistidine intermediate in catalysis.

This sequence belongs to the NDK family. In terms of assembly, homotetramer. It depends on Mg(2+) as a cofactor.

It is found in the cytoplasm. It catalyses the reaction a 2'-deoxyribonucleoside 5'-diphosphate + ATP = a 2'-deoxyribonucleoside 5'-triphosphate + ADP. The enzyme catalyses a ribonucleoside 5'-diphosphate + ATP = a ribonucleoside 5'-triphosphate + ADP. In terms of biological role, major role in the synthesis of nucleoside triphosphates other than ATP. The ATP gamma phosphate is transferred to the NDP beta phosphate via a ping-pong mechanism, using a phosphorylated active-site intermediate. The protein is Nucleoside diphosphate kinase of Anaplasma phagocytophilum (strain HZ).